Here is a 571-residue protein sequence, read N- to C-terminus: NADH-quinone oxidoreductase subunit C/D (571 aa).

Positions Met-1–Arg-171 are NADH dehydrogenase I subunit C. The segment at Ala-194 to Arg-571 is NADH dehydrogenase I subunit D.

This sequence in the N-terminal section; belongs to the complex I 30 kDa subunit family. It in the C-terminal section; belongs to the complex I 49 kDa subunit family. As to quaternary structure, NDH-1 is composed of 13 different subunits. Subunits NuoB, CD, E, F, and G constitute the peripheral sector of the complex.

It is found in the cell inner membrane. The catalysed reaction is a quinone + NADH + 5 H(+)(in) = a quinol + NAD(+) + 4 H(+)(out). Functionally, NDH-1 shuttles electrons from NADH, via FMN and iron-sulfur (Fe-S) centers, to quinones in the respiratory chain. The immediate electron acceptor for the enzyme in this species is believed to be ubiquinone. Couples the redox reaction to proton translocation (for every two electrons transferred, four hydrogen ions are translocated across the cytoplasmic membrane), and thus conserves the redox energy in a proton gradient. This Hydrogenobaculum sp. (strain Y04AAS1) protein is NADH-quinone oxidoreductase subunit C/D (nuoC).